We begin with the raw amino-acid sequence, 364 residues long: Envelope glycoprotein US27 (364 aa).

The Virion surface segment spans residues 1–36; the sequence is MTTSTTTTTNIMLQVSNVTNHTLNSTEIYQLFEYTR. Residues asparagine 17, asparagine 20, and asparagine 24 are each glycosylated (N-linked (GlcNAc...) asparagine; by host). A helical transmembrane segment spans residues 37-57; that stretch reads FGVWLMCIVGTFLNMLVITTI. Topologically, residues 58 to 69 are intravirion; sequence LYYRRKKKSPSD. A helical membrane pass occupies residues 70–90; it reads TYICNLAVADLLIVVGLPFFL. Residues 91-103 are Virion surface-facing; sequence EYAKHHPKLSREV. Residues 104–124 form a helical membrane-spanning segment; it reads VCSGLNACFYICLFAGVCFLI. Over 125 to 150 the chain is Intravirion; the sequence is NLSMDRYCVIVWGVELNRVRNNKRAT. The chain crosses the membrane as a helical span at residues 151–171; the sequence is CWVVIFWILAALMGMPHYLMY. Topologically, residues 172–188 are virion surface; the sequence is SHTNNECVGEFANETSG. Residues 189–209 traverse the membrane as a helical segment; it reads WFPVFLNTKVNICGYLAPIVL. The Intravirion portion of the chain corresponds to 210–234; sequence MAYTYNRMVRFIINYVGKWHMQTLH. The helical transmembrane segment at 235–255 threads the bilayer; it reads VLLVVVVSFASFWFPFNLALF. The Virion surface portion of the chain corresponds to 256–279; the sequence is LESIRLLSGTQNETLQTVITFCLY. The chain crosses the membrane as a helical span at residues 280 to 300; that stretch reads VGQFLAYVRACLNPGIYILVG. The Intravirion segment spans residues 301-364; that stretch reads TQMRKDMWTT…MESGEEEFLL (64 aa). Residues 344–364 are disordered; it reads KRTHYDRKHAPMESGEEEFLL.

This sequence belongs to the G-protein coupled receptor 1 family. As to quaternary structure, heterodimerizes with US28.

The protein localises to the virion. It localises to the host cell membrane. In terms of biological role, plays an important role in spread of HCMV via the extracellular route. As a G-protein-coupled receptor (vGPCR), may activate signaling pathways important for virion assembly or egress processes. The polypeptide is Envelope glycoprotein US27 (US27) (Homo sapiens (Human)).